The following is a 189-amino-acid chain: Transcription factor FapR (189 aa).

Belongs to the FapR family.

Its function is as follows. Transcriptional factor involved in regulation of membrane lipid biosynthesis by repressing genes involved in fatty acid and phospholipid metabolism. In Exiguobacterium sp. (strain ATCC BAA-1283 / AT1b), this protein is Transcription factor FapR.